We begin with the raw amino-acid sequence, 243 residues long: Tryptophan synthase alpha chain (243 aa).

Residues Glu-31 and Asp-42 each act as proton acceptor in the active site.

The protein belongs to the TrpA family. Tetramer of two alpha and two beta chains.

The enzyme catalyses (1S,2R)-1-C-(indol-3-yl)glycerol 3-phosphate + L-serine = D-glyceraldehyde 3-phosphate + L-tryptophan + H2O. The protein operates within amino-acid biosynthesis; L-tryptophan biosynthesis; L-tryptophan from chorismate: step 5/5. Its function is as follows. The alpha subunit is responsible for the aldol cleavage of indoleglycerol phosphate to indole and glyceraldehyde 3-phosphate. This Staphylococcus epidermidis (strain ATCC 35984 / DSM 28319 / BCRC 17069 / CCUG 31568 / BM 3577 / RP62A) protein is Tryptophan synthase alpha chain.